We begin with the raw amino-acid sequence, 362 residues long: Class I histocompatibility antigen, Gogo-B*0101 alpha chain (362 aa).

The signal sequence occupies residues 1–24 (MRVTAPRTLLLLLSAALALTETWA). Positions 25–114 (GSHSMRYFDT…ALRYYNQSEA (90 aa)) are alpha-1. Residues 25-308 (GSHSMRYFDT…EPSSQSTIPI (284 aa)) are Extracellular-facing. An N-linked (GlcNAc...) asparagine glycan is attached at asparagine 110. Residues 115 to 206 (GSHTIQRMFG…ENGRETLQRA (92 aa)) are alpha-2. 2 disulfides stabilise this stretch: cysteine 125–cysteine 188 and cysteine 227–cysteine 283. The alpha-3 stretch occupies residues 207-298 (DTPKTHVTHH…GLPKPLTLRW (92 aa)). Positions 209–295 (PKTHVTHHPI…QHEGLPKPLT (87 aa)) constitute an Ig-like C1-type domain. The segment at 299 to 308 (EPSSQSTIPI) is connecting peptide. Residues 309–332 (VGIVAGLAVLAVVVIGAVVTAVIC) form a helical membrane-spanning segment. Over 333-362 (RRKSSGGKGGSYSQAASSDSAQGSDVSLTA) the chain is Cytoplasmic. The interval 335 to 362 (KSSGGKGGSYSQAASSDSAQGSDVSLTA) is disordered. Residues 343–362 (SYSQAASSDSAQGSDVSLTA) are compositionally biased toward low complexity. Phosphoserine is present on residues serine 356 and serine 359.

It belongs to the MHC class I family. In terms of assembly, heterodimer of an alpha chain and a beta chain (beta-2-microglobulin).

Its subcellular location is the membrane. Its function is as follows. Involved in the presentation of foreign antigens to the immune system. This chain is Class I histocompatibility antigen, Gogo-B*0101 alpha chain, found in Gorilla gorilla gorilla (Western lowland gorilla).